Consider the following 339-residue polypeptide: Undecaprenyl-phosphate 4-deoxy-4-formamido-L-arabinose transferase (339 aa).

Helical transmembrane passes span 235 to 255 and 270 to 290; these read LSII…MLIV and FVLF…MGLL.

It belongs to the glycosyltransferase 2 family.

The protein resides in the cell inner membrane. The catalysed reaction is UDP-4-deoxy-4-formamido-beta-L-arabinose + di-trans,octa-cis-undecaprenyl phosphate = 4-deoxy-4-formamido-alpha-L-arabinopyranosyl di-trans,octa-cis-undecaprenyl phosphate + UDP. The protein operates within glycolipid biosynthesis; 4-amino-4-deoxy-alpha-L-arabinose undecaprenyl phosphate biosynthesis; 4-amino-4-deoxy-alpha-L-arabinose undecaprenyl phosphate from UDP-4-deoxy-4-formamido-beta-L-arabinose and undecaprenyl phosphate: step 1/2. It participates in bacterial outer membrane biogenesis; lipopolysaccharide biosynthesis. Catalyzes the transfer of 4-deoxy-4-formamido-L-arabinose from UDP to undecaprenyl phosphate. The modified arabinose is attached to lipid A and is required for resistance to polymyxin and cationic antimicrobial peptides. In Pseudomonas fluorescens (strain ATCC BAA-477 / NRRL B-23932 / Pf-5), this protein is Undecaprenyl-phosphate 4-deoxy-4-formamido-L-arabinose transferase.